We begin with the raw amino-acid sequence, 594 residues long: MTMATTAMNVSVPPPDEEEQLLAKFVFGDTTDLQENLAKFNADFIFNEQEMDVEDQEDEGSESDNSEEDEAQNGELDHVNNDQLFFVDDGGNEDSQDKNEDTMDVDDEDDSSSDDYSEDSEEAAWIDSDDEKIKVPILVTNKTKKLRTSYNESKINGVHYINRLRSQFEKIYPRPKWVDDESDSELDDEEDDEEEGSNNVINGDINALTKILSTTYNYKDTLSNSKLLPPKKLDIVRLKDANASHPSHSAIQSLSFHPSKPLLLTGGYDKTLRIYHIDGKTNHLVTSLHLVGSPIQTCTFYTSLSNQNQQNIFTAGRRRYMHSWDLSLENLTHSQTAKIEKFSRLYGHESTQRSFENFKVAHLQNSQTNSVHGIVLLQGNNGWINILHSTSGLWLMGCKIEGVITDFCIDYQPISRGKFRTILIAVNAYGEVWEFDLNKNGHVIRRWKDQGGVGITKIQVGGGTTTTCPALQISKIKQNRWLAVGSESGFVNLYDRNNAMTSSTPTPVAALDQLTTTISNLQFSPDGQILCMASRAVKDALRLVHLPSCSVFSNWPTSGTPLGKVTSVAFSPSGGLLAVGNEQGKVRLWKLNHY.

Disordered stretches follow at residues 48-128 (EQEM…WIDS) and 176-200 (KWVDDESDSELDDEEDDEEEGSNNV). Acidic residues-rich tracts occupy residues 49 to 72 (QEMDVEDQEDEGSESDNSEEDEAQ), 102 to 128 (TMDVDDEDDSSSDDYSEDSEEAAWIDS), and 180 to 196 (DESDSELDDEEDDEEEG). Residues 101–190 (DTMDVDDEDD…ESDSELDDEE (90 aa)) form an interaction with UTP21 region. A phosphoserine mark is found at Ser182 and Ser184. WD repeat units follow at residues 246-285 (PSHSAIQSLSFHPSKPLLLTGGYDKTLRIYHIDGKTNHLV), 290-334 (LVGS…LTHS), 463-504 (GTTT…TSST), 513-554 (QLTT…VFSN), and 560-593 (TPLGKVTSVAFSPSGGLLAVGNEQGKVRLWKLNH).

This sequence belongs to the WD repeat UTP18 family. Interacts with snoRNA U3. Interacts with MPP10, UTP21 and UTP25. Component of the ribosomal small subunit (SSU) processome composed of at least 40 protein subunits and snoRNA U3.

The protein resides in the nucleus. It localises to the nucleolus. Involved in nucleolar processing of pre-18S ribosomal RNA and ribosome assembly. This chain is U3 small nucleolar RNA-associated protein 18 (UTP18), found in Saccharomyces cerevisiae (strain ATCC 204508 / S288c) (Baker's yeast).